Reading from the N-terminus, the 320-residue chain is MGKLHRGLAEFNGCASSIPPKYQTVIISNEEKKGFSSQSRRFEEYLNESPGPGSYLSHSPAEGCSPSFSKRGTGSFASKGGRVPRSFQRLSPGPDAYNLQMSLLHKHDFNRGESRIFRLPYALKKEKPNNENPAPNQYDVSYRAVDKNSTISGESAFRSKTRRSAVVSDKFKGPSPCHYKVSDVLVQKSPQALVSCFKSKTARIQSPVRNNIPGPGTYNPHQPPEPVKRTVLPRRYYLGLSAPPLIPEKVPPFPGPGHYDIVNYNRPVKHMVSSAAFLSGTNRHMQEVKGQDIPGPGFYEPTVLSKTSFLYNPAKLWIPA.

The segment at 46–91 (LNESPGPGSYLSHSPAEGCSPSFSKRGTGSFASKGGRVPRSFQRLS) is disordered. 7 STPGR repeats span residues 49-82 (SPGP…KGGR), 91-103 (SPGP…QMSL), 132-163 (NPAP…KTRR), 173-192 (GPSP…SPQA), 213-233 (PGPG…TVLP), 254-266 (PGPG…NYNR), and 294-305 (PGPGFYEPTVLS). The segment covering 66–76 (PSFSKRGTGSF) has biased composition (polar residues). Residues 207–226 (PVRNNIPGPGTYNPHQPPEP) are disordered.

Belongs to the STPG1 family.

It localises to the cytoplasm. The protein resides in the nucleus. May positively contribute to the induction of apoptosis triggered by O(6)-methylguanine. This is O(6)-methylguanine-induced apoptosis 2 (stpg1) from Danio rerio (Zebrafish).